The primary structure comprises 293 residues: Methylsterol monooxygenase 1 (293 aa).

2 consecutive transmembrane segments (helical) span residues 55 to 75 (LIVH…FQFI) and 100 to 120 (KILF…YYFT). One can recognise a Fatty acid hydroxylase domain in the interval 144 to 274 (GCAVIEDTWH…FTWWDKLFGT (131 aa)). A Histidine box-1 motif is present at residues 157-161 (HRLLH). The Histidine box-2 motif lies at 170–174 (HKVHH). A helical transmembrane segment spans residues 199–219 (FFIGIVLLCDHVILLWAWVTI). The Histidine box-3 signature appears at 249 to 255 (HHDFHHM).

The protein belongs to the sterol desaturase family. Fe cation is required as a cofactor. Post-translationally, ubiquitinated by MARCHF6, leading to proteasomal degradation.

It localises to the endoplasmic reticulum membrane. The catalysed reaction is 4,4-dimethyl-5alpha-cholest-7-en-3beta-ol + 6 Fe(II)-[cytochrome b5] + 3 O2 + 5 H(+) = 4alpha-carboxy-4beta-methyl-5alpha-cholest-7-ene-3beta-ol + 6 Fe(III)-[cytochrome b5] + 4 H2O. The enzyme catalyses 4,4-dimethyl-5alpha-cholesta-8,24-dien-3beta-ol + 6 Fe(II)-[cytochrome b5] + 3 O2 + 5 H(+) = 4beta-methylzymosterol-4alpha-carboxylate + 6 Fe(III)-[cytochrome b5] + 4 H2O. It carries out the reaction 4alpha-methylzymosterol + 6 Fe(II)-[cytochrome b5] + 3 O2 + 5 H(+) = 4alpha-carboxyzymosterol + 6 Fe(III)-[cytochrome b5] + 4 H2O. It catalyses the reaction 4alpha-methyl-5alpha-cholest-7-en-3beta-ol + 6 Fe(II)-[cytochrome b5] + 3 O2 + 5 H(+) = 4alpha-carboxy-5alpha-cholest-7-en-3beta-ol + 6 Fe(III)-[cytochrome b5] + 4 H2O. The catalysed reaction is 4,4-dimethyl-5alpha-cholest-8-en-3beta-ol + 6 Fe(II)-[cytochrome b5] + 3 O2 + 5 H(+) = 4alpha-carboxy-4beta-methyl-5alpha-cholest-8-en-3beta-ol + 6 Fe(III)-[cytochrome b5] + 4 H2O. The enzyme catalyses 4alpha-methyl-5alpha-cholest-8-en-3beta-ol + 6 Fe(II)-[cytochrome b5] + 3 O2 + 5 H(+) = 4alpha-carboxy-5alpha-cholest-8-ene-3beta-ol + 6 Fe(III)-[cytochrome b5] + 4 H2O. It functions in the pathway steroid biosynthesis; zymosterol biosynthesis; zymosterol from lanosterol: step 3/6. Its pathway is steroid biosynthesis; cholesterol biosynthesis. Catalyzes the three-step monooxygenation required for the demethylation of 4,4-dimethyl and 4alpha-methylsterols, which can be subsequently metabolized to cholesterol. The protein is Methylsterol monooxygenase 1 (Msmo1) of Mus musculus (Mouse).